A 431-amino-acid chain; its full sequence is MSKIINVIGREIMDSRGNPTVEAEVHLEGGFNGMAAAPSGASTGSREALELRDGDKTRYMGKGVLKAVANINGPIRDALMGKDATNQAELDQIMIDLDGTENKDKLGANAILAVSLSAAKAAASFKGLPLYAHIAELNGTAGQYSMPVPMMNILNGGEHADNNVDIQEFMVQPVGAKTFREALQVGAEIFHNLKKVLQEKGLSTSVGDEGGFAPNLASNADALAMIKVAVEKAGYKLGEDVTLALDCAASEFYKDGQYDLTGEGKVFSANGFSDFLKSLTEQYPIASIEDGLDESDWDGWAYQTQIMGDKIQLVGDDLFVTNTKILKRGIDNNIANSILIKFNQIGSLTETLAAIRMAKDAGYTVVISHRSGETEDSTIADLAVATSAGQIKTGSLCRSDRVAKYNQLLRIEEQLGEKAPYRGRSEIKGKA.

Position 167 (Gln167) interacts with (2R)-2-phosphoglycerate. Glu209 acts as the Proton donor in catalysis. The Mg(2+) site is built by Asp246, Glu289, and Asp316. 4 residues coordinate (2R)-2-phosphoglycerate: Lys341, Arg370, Ser371, and Lys392. Catalysis depends on Lys341, which acts as the Proton acceptor.

It belongs to the enolase family. As to quaternary structure, component of the RNA degradosome, a multiprotein complex involved in RNA processing and mRNA degradation. Mg(2+) is required as a cofactor.

It is found in the cytoplasm. Its subcellular location is the secreted. The protein resides in the cell surface. It carries out the reaction (2R)-2-phosphoglycerate = phosphoenolpyruvate + H2O. Its pathway is carbohydrate degradation; glycolysis; pyruvate from D-glyceraldehyde 3-phosphate: step 4/5. Functionally, catalyzes the reversible conversion of 2-phosphoglycerate (2-PG) into phosphoenolpyruvate (PEP). It is essential for the degradation of carbohydrates via glycolysis. In Shewanella sediminis (strain HAW-EB3), this protein is Enolase.